We begin with the raw amino-acid sequence, 554 residues long: Peroxisomal membrane protein PEX29 (554 aa).

At 1–145 (MDSVTNFFWN…PFMIMDELIK (145 aa)) the chain is on the cytoplasmic side. Composition is skewed to polar residues over residues 11 to 22 (DTYNAGTPTRST) and 43 to 53 (ISSGSRTSDPT). Positions 11–73 (DTYNAGTPTR…PTSGGGFPST (63 aa)) are disordered. A compositionally biased stretch (low complexity) spans 55-64 (GSLPSSSGQP). Residues 146-166 (ILNWTNPAYTVSIMFLYTLII) traverse the membrane as a helical segment. At 167-172 (LKPFQM) the chain is on the peroxisomal side. A helical transmembrane segment spans residues 173 to 193 (LSSLPIFYLLFCVMVPQYLYI). Topologically, residues 194-264 (HKPNPTSYLD…LQKFAFFTNE (71 aa)) are cytoplasmic. Residues 265–285 (AISSFYFIVLLIIATLNFLYM) traverse the membrane as a helical segment. Topologically, residues 286 to 287 (DK) are peroxisomal. Residues 288–308 (FIKLIPMRPVLILLGWGFFIA) form a helical membrane-spanning segment. The Cytoplasmic segment spans residues 309–554 (SHPSNREYLL…ELTDTLNSTI (246 aa)). The interval 500–532 (GVTKGSMSGGLTHSSDDDRADEESINGTIPNLN) is disordered.

It belongs to the PEX28-32 family. PEX29 subfamily.

The protein resides in the peroxisome membrane. Its function is as follows. Involved in the regulation of peroxisome number, size and distribution. The sequence is that of Peroxisomal membrane protein PEX29 (PEX29) from Saccharomyces cerevisiae (strain ATCC 204508 / S288c) (Baker's yeast).